Here is a 141-residue protein sequence, read N- to C-terminus: Phage-like element PBSX protein XkdS (141 aa).

It to B.subtilis YqbS.

The chain is Phage-like element PBSX protein XkdS (xkdS) from Bacillus subtilis (strain 168).